A 591-amino-acid polypeptide reads, in one-letter code: Guanylate-binding protein 2 (591 aa).

The interval 1–309 is GTPase domain (Globular); sequence MAPEINLPGP…NAISSGDLPC (309 aa). In terms of domain architecture, GB1/RHD3-type G spans 35 to 276; that stretch reads TQPVVVVAIV…FCSYILSHSN (242 aa). GTP contacts are provided by residues 45 to 52, 181 to 182, and Leu245; these read GLYRTGKS and RD. A Cysteine methyl ester modification is found at Cys588. Cys588 is lipidated: S-geranylgeranyl cysteine. Positions 589–591 are cleaved as a propeptide — removed in mature form; that stretch reads NIL.

This sequence belongs to the TRAFAC class dynamin-like GTPase superfamily. GB1/RHD3 GTPase family. GB1 subfamily. In terms of assembly, homodimer; homodimerization occurs upon GTP-binding and is required for the association with membranous structures. Heterodimer with other family members, including GBP1, GBP3, GBP4 and GBP5. In terms of processing, (Microbial infection) Ubiquitinated by S.flexneri IpaH9.8, leading to its degradation by the proteasome, thereby preventing its ability to promote host defense against bacterial infection. Isoprenylation is required for proper subcellular location.

Its subcellular location is the cytoplasmic vesicle membrane. It localises to the golgi apparatus membrane. The protein localises to the cytoplasm. It is found in the perinuclear region. The catalysed reaction is GTP + H2O = GDP + phosphate + H(+). Functionally, interferon (IFN)-inducible GTPase that plays important roles in innate immunity against a diverse range of bacterial, viral and protozoan pathogens. Hydrolyzes GTP to GMP in 2 consecutive cleavage reactions, but the major reaction product is GDP. Following infection, recruited to the pathogen-containing vacuoles or vacuole-escaped bacteria and acts as a positive regulator of inflammasome assembly by promoting the release of inflammasome ligands from bacteria. Acts by promoting lysis of pathogen-containing vacuoles, releasing pathogens into the cytosol. Following pathogen release in the cytosol, promotes recruitment of proteins that mediate bacterial cytolysis: this liberates ligands that are detected by inflammasomes, such as lipopolysaccharide (LPS) that activates the non-canonical CASP4/CASP11 inflammasome or double-stranded DNA (dsDNA) that activates the AIM2 inflammasome. Confers protection to the protozoan pathogen Toxoplasma gondii. Independently of its GTPase activity, acts as an inhibitor of various viruses infectivity, such as HIV-1, Zika and influenza A viruses, by inhibiting FURIN-mediated maturation of viral envelope proteins. The chain is Guanylate-binding protein 2 from Homo sapiens (Human).